A 365-amino-acid polypeptide reads, in one-letter code: MPDPLPLVFDAPRRALPPRHFADLADTERAAAVADLGLPAFRGKQLANQYFGRLISDPSQMTDLPAGVRDQVGAALFPELLEAAREIECDRGETRKVLWRAVDKTTFESVLMRYPDRNTVCISSQAGCGMACPFCATGQGGLKRNLSTAEILEQVRFASAELRDREGGRLSNIVFMGMGEPLANYNRVVAAVRRITASSPHGFGISARSVTVSTVGLAPAIRKLADEKLNVTLAVSLHTPDDELRDTLVPVNNRWKVDEVLDAARYYADLTGRRVSIEYALIRDVNDQPWRADLLGRKLHATLGPLVHVNLIPLNPTPGSEWDASPKPVEREFVRRVRAKGVSCTVRDTRGREIAAACGQLAAQG.

The active-site Proton acceptor is the Glu-108. The Radical SAM core domain maps to Tyr-114–Arg-352. Cysteines 121 and 358 form a disulfide. 3 residues coordinate [4Fe-4S] cluster: Cys-128, Cys-132, and Cys-135. Residues Gly-179–Glu-180, Ser-213, Ser-236–His-238, and Asn-315 each bind S-adenosyl-L-methionine. Cys-358 functions as the S-methylcysteine intermediate in the catalytic mechanism.

It belongs to the radical SAM superfamily. RlmN family. Requires [4Fe-4S] cluster as cofactor.

It localises to the cytoplasm. The enzyme catalyses adenosine(2503) in 23S rRNA + 2 reduced [2Fe-2S]-[ferredoxin] + 2 S-adenosyl-L-methionine = 2-methyladenosine(2503) in 23S rRNA + 5'-deoxyadenosine + L-methionine + 2 oxidized [2Fe-2S]-[ferredoxin] + S-adenosyl-L-homocysteine. It catalyses the reaction adenosine(37) in tRNA + 2 reduced [2Fe-2S]-[ferredoxin] + 2 S-adenosyl-L-methionine = 2-methyladenosine(37) in tRNA + 5'-deoxyadenosine + L-methionine + 2 oxidized [2Fe-2S]-[ferredoxin] + S-adenosyl-L-homocysteine. Specifically methylates position 2 of adenine 2503 in 23S rRNA and position 2 of adenine 37 in tRNAs. In Mycolicibacterium gilvum (strain PYR-GCK) (Mycobacterium gilvum (strain PYR-GCK)), this protein is Probable dual-specificity RNA methyltransferase RlmN.